The primary structure comprises 209 residues: Guanylyl cyclase-activating protein 3 (209 aa).

Gly-2 carries the N-myristoyl glycine lipid modification. Asn-3 bears the Deamidated asparagine mark. EF-hand domains are found at residues 15 to 50, 52 to 87, 88 to 123, and 130 to 165; these read PTQE…QGLN, KANK…IMQE, KMEQ…VQAL, and SPEE…DQDL. Ca(2+) contacts are provided by Asp-65, Asn-67, Asp-69, Glu-76, Asp-101, Asp-103, Asn-105, Ser-107, Glu-112, Asp-143, Asn-145, Asp-147, Glu-149, and Glu-154. The segment at 187 to 209 is disordered; sequence QPDMETDSSKSPDKAGLGKVKMK.

As to expression, retina.

Stimulates guanylyl cyclase 1 (GC1) and GC2 when free calcium ions concentration is low and inhibits guanylyl cyclases when free calcium ions concentration is elevated. This Ca(2+)-sensitive regulation of guanylyl cyclase (GC) is a key event in recovery of the dark state of rod photoreceptors following light exposure. In Homo sapiens (Human), this protein is Guanylyl cyclase-activating protein 3 (GUCA1C).